A 386-amino-acid polypeptide reads, in one-letter code: SET and MYND domain-containing protein DDB_G0273589 (386 aa).

One can recognise an SET domain in the interval 6–294 (NGLELKSSEN…KGDQLTISYI (289 aa)). An MYND-type zinc finger spans residues 51-94 (CFNCIKQLPSVIKLSLKCNQCNEIWYCNEQCKNENINKHQHYEC). A coiled-coil region spans residues 136–171 (NNKFIEQQLNNNNNNNNDNEQLTNTLDDVFDLVENQ).

It belongs to the class V-like SAM-binding methyltransferase superfamily.

Functionally, probable methyltransferase. The chain is SET and MYND domain-containing protein DDB_G0273589 from Dictyostelium discoideum (Social amoeba).